Consider the following 149-residue polypeptide: Mediator of RNA polymerase II transcription subunit 9 (149 aa).

The interval 18–64 is disordered; the sequence is TNPTLDKPNAEATKEEFSSAENRDEKDYLTNQQPKNLSTPSTSSNGE. Positions 25 to 45 are enriched in basic and acidic residues; sequence PNAEATKEEFSSAENRDEKDY. Residues 46–63 show a composition bias toward polar residues; sequence LTNQQPKNLSTPSTSSNG. Short sequence motifs (nuclear localization signal) lie at residues 77–99 and 136–149; these read RKDPNNLSNQLETLTGSIRHRLK and KRDVLDDLYRKLQR.

This sequence belongs to the Mediator complex subunit 9 family. In terms of assembly, component of the Mediator complex, which is composed of at least 21 subunits that form three structurally distinct submodules. The Mediator head module contains MED6, MED8, MED11, SRB4/MED17, SRB5/MED18, ROX3/MED19, SRB2/MED20 and SRB6/MED22, the middle module contains MED1, MED4, NUT1/MED5, MED7, CSE2/MED9, NUT2/MED10, SRB7/MED21 and SOH1/MED31, and the tail module contains MED2, PGD1/MED3, RGR1/MED14, GAL11/MED15 and SIN4/MED16. The head and the middle modules interact directly with RNA polymerase II, whereas the elongated tail module interacts with gene-specific regulatory proteins. CSE2/MED9 interacts directly with MED4.

It localises to the nucleus. Functionally, component of the Mediator complex, a coactivator involved in the regulated transcription of nearly all RNA polymerase II-dependent genes. Mediator functions as a bridge to convey information from gene-specific regulatory proteins to the basal RNA polymerase II transcription machinery. The Mediator complex, having a compact conformation in its free form, is recruited to promoters by direct interactions with regulatory proteins and serves for the assembly of a functional preinitiation complex with RNA polymerase II and the general transcription factors. The Mediator complex unfolds to an extended conformation and partially surrounds RNA polymerase II, specifically interacting with the unphosphorylated form of the C-terminal domain (CTD) of RNA polymerase II. The Mediator complex dissociates from the RNA polymerase II holoenzyme and stays at the promoter when transcriptional elongation begins. The polypeptide is Mediator of RNA polymerase II transcription subunit 9 (CSE2) (Saccharomyces cerevisiae (strain ATCC 204508 / S288c) (Baker's yeast)).